A 362-amino-acid polypeptide reads, in one-letter code: tRNA/tmRNA (uracil-C(5))-methyltransferase (362 aa).

Q186, Y214, N219, E235, and D295 together coordinate S-adenosyl-L-methionine. Catalysis depends on C320, which acts as the Nucleophile. Catalysis depends on E354, which acts as the Proton acceptor.

It belongs to the class I-like SAM-binding methyltransferase superfamily. RNA M5U methyltransferase family. TrmA subfamily.

It carries out the reaction uridine(54) in tRNA + S-adenosyl-L-methionine = 5-methyluridine(54) in tRNA + S-adenosyl-L-homocysteine + H(+). It catalyses the reaction uridine(341) in tmRNA + S-adenosyl-L-methionine = 5-methyluridine(341) in tmRNA + S-adenosyl-L-homocysteine + H(+). Functionally, dual-specificity methyltransferase that catalyzes the formation of 5-methyluridine at position 54 (m5U54) in all tRNAs, and that of position 341 (m5U341) in tmRNA (transfer-mRNA). In Dechloromonas aromatica (strain RCB), this protein is tRNA/tmRNA (uracil-C(5))-methyltransferase.